We begin with the raw amino-acid sequence, 177 residues long: MIGILNRWRQFGRRYFWPHLLLGMVAASLGVPSNLSGVPDHAALANTSSSQSRQNHGTTNFNSLALLHDIHRRPSFSVDYWQQHALRTVIRHLSFALAPQAAYARVQEVAETERVAPSKIQQLALLDTLNALLTHEFKPPAIIRYTEQVERPVLSPYKPGLWLAQVQGIRAGPANLS.

The N-terminal stretch at 1-37 is a signal peptide; the sequence is MIGILNRWRQFGRRYFWPHLLLGMVAASLGVPSNLSG.

This sequence belongs to the SecM family.

It localises to the cytoplasm. Its subcellular location is the cytosol. The protein resides in the periplasm. Functionally, regulates secA expression by translational coupling of the secM secA operon. Translational pausing at a specific Pro residue 5 residues before the end of the protein may allow disruption of a mRNA repressor helix that normally suppresses secA translation initiation. This is Secretion monitor from Yersinia pseudotuberculosis serotype O:1b (strain IP 31758).